The sequence spans 231 residues: MQLPIPLFPATLIRRYKRFLADFELESGEIVTAHCPNSGSMKGCATPGSPAFLSRSDKPERKLKYTWELVKADGCWIGINTGLPNRLVREAIENGLVAELQGYQTIRPEVRYGENSRIDLLLCNADQLCYVEVKNVTLVEGNAVLFPDAATTRGQKHLRELMGVVRQGHRAVNFFVVQRADGEFVAPADLIDPEYGRLLRQAAANGVEILAYRAHVAPEGINITGKLSVRM.

The protein belongs to the SfsA family.

The polypeptide is Sugar fermentation stimulation protein homolog (Geotalea uraniireducens (strain Rf4) (Geobacter uraniireducens)).